The primary structure comprises 229 residues: Zinc finger matrin-type protein 4 (229 aa).

2 consecutive Matrin-type zinc fingers follow at residues 14–44 and 72–106; these read SYCK…KVRL and DKNK…LKLL. A disordered region spans residues 116-135; the sequence is TATPLSPLKPPRMDTAPVVA. Matrin-type zinc fingers lie at residues 145–175 and 198–228; these read RYCG…NAAR and YRCT…NLKN.

It is found in the nucleus. The protein is Zinc finger matrin-type protein 4 (ZMAT4) of Homo sapiens (Human).